The following is a 543-amino-acid chain: EH domain-containing protein 2 (543 aa).

Ser3 carries the post-translational modification Phosphoserine. In terms of domain architecture, Dynamin-type G spans 55–286; that stretch reads FDGKPMVLVA…DLFRDIQGLP (232 aa). Residues 65-72 are G1 motif; sequence GQYSTGKT. 65–72 provides a ligand contact to ATP; it reads GQYSTGKT. The segment at 91 to 92 is G2 motif; it reads EP. A KPF loop; caveolar targeting motif is present at residues 120-122; sequence KPF. The G3 motif stretch occupies residues 153 to 156; that stretch reads DTPG. A G4 motif region spans residues 219-222; that stretch reads NKAD. Lys220 is an ATP binding site. Position 243 (Val243) is a region of interest, G5 motif. Trp258 lines the ATP pocket. A mediates membrane-binding region spans residues 320-340; that stretch reads SVFGKENKKKQLILKLPVIFA. Phosphoserine is present on residues Ser438, Ser468, Ser470, Ser484, and Ser493. In terms of domain architecture, EH spans 449–537; that stretch reads DKSKYDEIFY…RRLVPPSKRR (89 aa). One can recognise an EF-hand domain in the interval 481 to 516; the sequence is LPNSVLGRIWKLSDVDRDGMLDDEEFALASHLIEAK. Ca(2+) is bound by residues Asp494, Asp496, Asp498, Met500, and Glu505. Residues 523–543 form a disordered region; that stretch reads PANLPRRLVPPSKRRHKGSAE. The segment covering 534–543 has biased composition (basic residues); that stretch reads SKRRHKGSAE.

It belongs to the TRAFAC class dynamin-like GTPase superfamily. Dynamin/Fzo/YdjA family. EHD subfamily. Homodimer and homooligomer. Interacts with EHD1. May also interact with EHD3 and EHD4. Interacts with MYOF. Interacts with EHBP1. Interacts with FER1L5 (via second C2 domain). Interacts with CAV1 in a cholesterol-dependent manner. Interacts (via EH domain) with PACSIN2 (via NPF motifs); this interaction probably stabilizes the caveolae. Highly expressed in heart and moderately expressed in placenta, lung, and skeletal muscle.

It localises to the cell membrane. The protein localises to the membrane. It is found in the caveola. The protein resides in the endosome membrane. Its subcellular location is the cytoplasm. It localises to the cytosol. The very low intrinsic ATPase activity is increased upon interaction with liposomes. In terms of biological role, ATP- and membrane-binding protein that controls membrane reorganization/tubulation upon ATP hydrolysis. Plays a role in membrane trafficking between the plasma membrane and endosomes. Important for the internalization of GLUT4. Required for fusion of myoblasts to skeletal muscle myotubes. Required for normal translocation of FER1L5 to the plasma membrane. Regulates the equilibrium between cell surface-associated and cell surface-dissociated caveolae by constraining caveolae at the cell membrane. The polypeptide is EH domain-containing protein 2 (Homo sapiens (Human)).